Consider the following 338-residue polypeptide: HTH-type transcriptional regulator SyrM 1 (338 aa).

An HTH lysR-type domain is found at 35-92 (LDLNTLLALEALLEHRNVTQAARHLGLSQPSVSRALIRLRGVFNDDLLVRGSSGMVPT). The segment at residues 52-72 (VTQAARHLGLSQPSVSRALIR) is a DNA-binding region (H-T-H motif).

It belongs to the LysR transcriptional regulatory family.

Functionally, transcriptional activator that regulates the expression of genes involved in symbiosis. Among other targets it acts on the nolWBTUV operon. In Sinorhizobium fredii (strain NBRC 101917 / NGR234), this protein is HTH-type transcriptional regulator SyrM 1 (syrM1).